Reading from the N-terminus, the 240-residue chain is 1-(5-phosphoribosyl)-5-[(5-phosphoribosylamino)methylideneamino] imidazole-4-carboxamide isomerase (240 aa).

Catalysis depends on Asp-8, which acts as the Proton acceptor. The active-site Proton donor is Asp-129.

It belongs to the HisA/HisF family.

The protein localises to the cytoplasm. It carries out the reaction 1-(5-phospho-beta-D-ribosyl)-5-[(5-phospho-beta-D-ribosylamino)methylideneamino]imidazole-4-carboxamide = 5-[(5-phospho-1-deoxy-D-ribulos-1-ylimino)methylamino]-1-(5-phospho-beta-D-ribosyl)imidazole-4-carboxamide. The protein operates within amino-acid biosynthesis; L-histidine biosynthesis; L-histidine from 5-phospho-alpha-D-ribose 1-diphosphate: step 4/9. The protein is 1-(5-phosphoribosyl)-5-[(5-phosphoribosylamino)methylideneamino] imidazole-4-carboxamide isomerase of Listeria welshimeri serovar 6b (strain ATCC 35897 / DSM 20650 / CCUG 15529 / CIP 8149 / NCTC 11857 / SLCC 5334 / V8).